A 191-amino-acid chain; its full sequence is Cell division protein SepF (191 aa).

Polar residues predominate over residues 157-178; that stretch reads YLNESPAQPVQTTTSFGRTATP. The interval 157-191 is disordered; that stretch reads YLNESPAQPVQTTTSFGRTATPTPAWGTDSRYAAQ.

It belongs to the SepF family. In terms of assembly, homodimer. Interacts with FtsZ.

The protein resides in the cytoplasm. Cell division protein that is part of the divisome complex and is recruited early to the Z-ring. Probably stimulates Z-ring formation, perhaps through the cross-linking of FtsZ protofilaments. Its function overlaps with FtsA. In Synechococcus elongatus (strain ATCC 33912 / PCC 7942 / FACHB-805) (Anacystis nidulans R2), this protein is Cell division protein SepF.